The following is a 101-amino-acid chain: Carboxysome shell vertex protein CcmL (101 aa).

The BMV domain occupies 1–84; the sequence is MQIAKVRGTV…VDAAVVAIID (84 aa).

Belongs to the CcmL/EutN family. CcmL subfamily. In terms of assembly, homopentamer. Interacts with full-length CcmM.

It localises to the carboxysome. Functionally, probably forms vertices in the carboxysome, a polyhedral inclusion where RuBisCO (ribulose bisphosphate carboxylase, rbcL-rbcS) is sequestered. Has been modeled to induce curvature upon insertion into an otherwise flat hexagonal molecular layer of CcmK subunits. This is Carboxysome shell vertex protein CcmL from Nostoc sp. (strain PCC 7120 / SAG 25.82 / UTEX 2576).